We begin with the raw amino-acid sequence, 162 residues long: Photosystem II extrinsic protein V (162 aa).

The signal sequence occupies residues 1–26; sequence MLKRYMLLAVATVFFAFQVLTSTATA. Residues Cys-62, Cys-65, His-66, and His-117 each contribute to the heme c site.

Belongs to the cytochrome c family. PsbV subfamily. In terms of assembly, PSII is composed of 1 copy each of membrane proteins PsbA, PsbB, PsbC, PsbD, PsbE, PsbF, PsbH, PsbI, PsbJ, PsbK, PsbL, PsbM, PsbT, PsbX, PsbY, PsbZ, Psb30/Ycf12, peripheral proteins PsbO, CyanoQ (PsbQ), PsbU, PsbV and a large number of cofactors. It forms dimeric complexes. Heme c serves as cofactor.

Its subcellular location is the cellular thylakoid membrane. Functionally, one of the extrinsic, lumenal subunits of photosystem II (PSII). PSII is a light-driven water plastoquinone oxidoreductase, using light energy to abstract electrons from H(2)O, generating a proton gradient subsequently used for ATP formation. The extrinsic proteins stabilize the structure of photosystem II oxygen-evolving complex (OEC), the ion environment of oxygen evolution and protect the OEC against heat-induced inactivation. Low-potential cytochrome c that plays a role in the OEC of PSII. This is Photosystem II extrinsic protein V from Acaryochloris marina (strain MBIC 11017).